We begin with the raw amino-acid sequence, 896 residues long: Translation initiation factor IF-2 (896 aa).

The disordered stretch occupies residues 32–306 (LAQAGSSDTK…HKTKKQSEEH (275 aa)). Composition is skewed to polar residues over residues 35-48 (AGSS…VSKA) and 114-126 (ADST…SSQE). Residues 156–170 (ARNEETPIIRTRTEP) are compositionally biased toward basic and acidic residues. The span at 213–237 (QQTRPSVETASTKQQQPSGTNTRPA) shows a compositional bias: polar residues. Positions 256-280 (RGPDRDRTKRSDENVKAFTGRDRYG) are enriched in basic and acidic residues. A tr-type G domain is found at 401 to 570 (IRSPIVAFMG…ALQAEVLELK (170 aa)). The segment at 410 to 417 (GHVDHGKT) is G1. Residue 410-417 (GHVDHGKT) participates in GTP binding. The segment at 435–439 (AITQH) is G2. The G3 stretch occupies residues 456 to 459 (DTPG). GTP is bound by residues 456-460 (DTPGH) and 510-513 (NKCD). The G4 stretch occupies residues 510 to 513 (NKCD). A G5 region spans residues 546 to 548 (SAK).

Belongs to the TRAFAC class translation factor GTPase superfamily. Classic translation factor GTPase family. IF-2 subfamily.

The protein localises to the cytoplasm. One of the essential components for the initiation of protein synthesis. Protects formylmethionyl-tRNA from spontaneous hydrolysis and promotes its binding to the 30S ribosomal subunits. Also involved in the hydrolysis of GTP during the formation of the 70S ribosomal complex. In Chlamydia muridarum (strain MoPn / Nigg), this protein is Translation initiation factor IF-2 (infB).